We begin with the raw amino-acid sequence, 182 residues long: Adenine phosphoribosyltransferase (182 aa).

The protein belongs to the purine/pyrimidine phosphoribosyltransferase family. In terms of assembly, homodimer.

The protein localises to the cytoplasm. The enzyme catalyses AMP + diphosphate = 5-phospho-alpha-D-ribose 1-diphosphate + adenine. It participates in purine metabolism; AMP biosynthesis via salvage pathway; AMP from adenine: step 1/1. Catalyzes a salvage reaction resulting in the formation of AMP, that is energically less costly than de novo synthesis. The polypeptide is Adenine phosphoribosyltransferase (Koribacter versatilis (strain Ellin345)).